The following is a 254-amino-acid chain: tRNA (guanine-N(1)-)-methyltransferase (254 aa).

Residues G112 and I131 to L136 each bind S-adenosyl-L-methionine.

It belongs to the RNA methyltransferase TrmD family. In terms of assembly, homodimer.

It localises to the cytoplasm. The catalysed reaction is guanosine(37) in tRNA + S-adenosyl-L-methionine = N(1)-methylguanosine(37) in tRNA + S-adenosyl-L-homocysteine + H(+). Its function is as follows. Specifically methylates guanosine-37 in various tRNAs. The protein is tRNA (guanine-N(1)-)-methyltransferase of Persephonella marina (strain DSM 14350 / EX-H1).